Reading from the N-terminus, the 139-residue chain is Acidic phospholipase A2 5 (139 aa).

The N-terminal stretch at 1–16 is a signal peptide; that stretch reads MRTLWIVAVWLMGVEG. Disulfide bonds link C42/C131, C44/C60, C59/C111, C65/C139, C66/C104, C73/C97, and C91/C102. 3 residues coordinate Ca(2+): Y43, G45, and G47. H63 is an active-site residue. D64 serves as a coordination point for Ca(2+). D105 is an active-site residue.

The protein belongs to the phospholipase A2 family. Group II subfamily. D49 sub-subfamily. The cofactor is Ca(2+). Expressed by the venom gland.

The protein resides in the secreted. The catalysed reaction is a 1,2-diacyl-sn-glycero-3-phosphocholine + H2O = a 1-acyl-sn-glycero-3-phosphocholine + a fatty acid + H(+). Its function is as follows. PLA2 catalyzes the calcium-dependent hydrolysis of the 2-acyl groups in 3-sn-phosphoglycerides. The polypeptide is Acidic phospholipase A2 5 (Echis pyramidum leakeyi (Leakey's carpet viper)).